We begin with the raw amino-acid sequence, 92 residues long: Large ribosomal subunit protein bL25 (92 aa).

The protein belongs to the bacterial ribosomal protein bL25 family. Part of the 50S ribosomal subunit; part of the 5S rRNA/L5/L18/L25 subcomplex. Contacts the 5S rRNA. Binds to the 5S rRNA independently of L5 and L18.

This is one of the proteins that binds to the 5S RNA in the ribosome where it forms part of the central protuberance. In Vibrio vulnificus (strain CMCP6), this protein is Large ribosomal subunit protein bL25.